A 446-amino-acid chain; its full sequence is Transcription factor SOX-8 (446 aa).

Disordered regions lie at residues 1 to 58 (MLDM…DPAE), 155 to 259 (AERL…RQNI), and 318 to 378 (HKSA…PFAG). The segment covering 40-53 (EGLGRAGVAVGGAR) has biased composition (gly residues). The tract at residues 58–100 (EAADERFPACIRDAVSQVLKGYDWSLVPMPVRGGGGGALKAKP) is dimerization (DIM). Residues 102 to 170 (VKRPMNAFMV…QHKKDHPDYK (69 aa)) constitute a DNA-binding region (HMG box). Composition is skewed to basic and acidic residues over residues 155 to 171 (AERL…DYKY), 210 to 219 (DGHHHGDHTG), and 242 to 253 (PELKLEGRRPVD). Residues 224–298 (PPTPPTTPKT…LPLGGPAPPE (75 aa)) form a transactivation domain (TAM) region. Positions 335–446 (RPHIKTEQPS…QPVYTTLTRP (112 aa)) are transactivation domain (TAC). The span at 362-378 (SGQSSATPAAPAGPFAG) shows a compositional bias: low complexity. Positions 400–408 (PGLYQYPCF) match the 9aaTAD motif. The interval 425-446 (LPPAHSPTSHWDQPVYTTLTRP) is disordered. Positions 430 to 446 (SPTSHWDQPVYTTLTRP) are enriched in polar residues.

It is found in the nucleus. Transcription factor that may play a role in central nervous system, limb and facial development. May be involved in male sex determination. Binds the consensus motif 5'-[AT][AT]CAA[AT]G-3'. The sequence is that of Transcription factor SOX-8 from Homo sapiens (Human).